The sequence spans 207 residues: Probable isochorismatase (207 aa).

Belongs to the isochorismatase family.

It catalyses the reaction isochorismate + H2O = (2S,3S)-2,3-dihydroxy-2,3-dihydrobenzoate + pyruvate. It participates in antibiotic biosynthesis; phenazine biosynthesis. Its function is as follows. Involved in the biosynthesis of the antibiotic phenazine, a nitrogen-containing heterocyclic molecule having important roles in virulence, competition and biological control. This isochorismatase may remove pyruvate from chorismate during the formation of the phenazine ring structure and/or stabilize the phenazine biosynthetic complex. The polypeptide is Probable isochorismatase (phzA) (Pseudomonas chlororaphis (Pseudomonas aureofaciens)).